Here is a 461-residue protein sequence, read N- to C-terminus: Cysteine--tRNA ligase (461 aa).

Cysteine 28 provides a ligand contact to Zn(2+). A 'HIGH' region motif is present at residues 30-40; the sequence is MTVYDYCHLGH. Cysteine 212, histidine 237, and glutamate 241 together coordinate Zn(2+). A 'KMSKS' region motif is present at residues 269–273; the sequence is KMSKS. Lysine 272 is an ATP binding site.

It belongs to the class-I aminoacyl-tRNA synthetase family. In terms of assembly, monomer. It depends on Zn(2+) as a cofactor.

Its subcellular location is the cytoplasm. It catalyses the reaction tRNA(Cys) + L-cysteine + ATP = L-cysteinyl-tRNA(Cys) + AMP + diphosphate. The protein is Cysteine--tRNA ligase of Aromatoleum aromaticum (strain DSM 19018 / LMG 30748 / EbN1) (Azoarcus sp. (strain EbN1)).